Consider the following 595-residue polypeptide: Glutamyl-tRNA(Gln) amidotransferase subunit B, mitochondrial (595 aa).

The N-terminal 114 residues, 1 to 114 (MPRLWYSRYL…RAPTSTVAEP (114 aa)), are a transit peptide targeting the mitochondrion. The segment at 59–78 (KEEAKRSKSQSRNGRGKKQV) is disordered.

It belongs to the GatB/GatE family. GatB subfamily. As to quaternary structure, subunit of the heterotrimeric GatCAB amidotransferase (AdT) complex, composed of A, B and C subunits.

It localises to the mitochondrion. The catalysed reaction is L-glutamyl-tRNA(Gln) + L-glutamine + ATP + H2O = L-glutaminyl-tRNA(Gln) + L-glutamate + ADP + phosphate + H(+). Functionally, allows the formation of correctly charged Gln-tRNA(Gln) through the transamidation of misacylated Glu-tRNA(Gln) in the mitochondria. The reaction takes place in the presence of glutamine and ATP through an activated gamma-phospho-Glu-tRNA(Gln). The protein is Glutamyl-tRNA(Gln) amidotransferase subunit B, mitochondrial of Talaromyces stipitatus (strain ATCC 10500 / CBS 375.48 / QM 6759 / NRRL 1006) (Penicillium stipitatum).